The following is an 899-amino-acid chain: Translation initiation factor IF-2 (899 aa).

Disordered stretches follow at residues 116–135 (AKARAEQQAREAAEQKARLQ), 170–189 (RGGGTVKPAPKPAETLEQKK), and 262–306 (DREI…ANKH). The tr-type G domain maps to 399–568 (TRPPVVTIMG…LIQSELMELK (170 aa)). The tract at residues 408 to 415 (GHVDHGKT) is G1. 408–415 (GHVDHGKT) lines the GTP pocket. Residues 433-437 (GITQH) form a G2 region. A G3 region spans residues 454-457 (DTPG). Residues 454–458 (DTPGH) and 508–511 (NKMD) contribute to the GTP site. Residues 508–511 (NKMD) form a G4 region. The segment at 544–546 (SAH) is G5.

Belongs to the TRAFAC class translation factor GTPase superfamily. Classic translation factor GTPase family. IF-2 subfamily.

The protein localises to the cytoplasm. Functionally, one of the essential components for the initiation of protein synthesis. Protects formylmethionyl-tRNA from spontaneous hydrolysis and promotes its binding to the 30S ribosomal subunits. Also involved in the hydrolysis of GTP during the formation of the 70S ribosomal complex. The sequence is that of Translation initiation factor IF-2 from Acinetobacter baumannii (strain AB307-0294).